Here is a 91-residue protein sequence, read N- to C-terminus: MSDFNIVGVIKVMPSDPEVNLDELEEKLKAVIPEKYGLAKVEREPIAFGLVALKFYVLGKDEEGYSFDEVAEKFKEVENVESAEVETVSRI.

Belongs to the EF-1-beta/EF-1-delta family.

In terms of biological role, promotes the exchange of GDP for GTP in EF-1-alpha/GDP, thus allowing the regeneration of EF-1-alpha/GTP that could then be used to form the ternary complex EF-1-alpha/GTP/AAtRNA. This is Elongation factor 1-beta (ef1b) from Pyrococcus abyssi (strain GE5 / Orsay).